The chain runs to 506 residues: Galactose/methyl galactoside import ATP-binding protein MglA (506 aa).

2 ABC transporter domains span residues 14–249 and 264–506; these read LEMS…VGRS and VILE…SLHL. ATP is bound at residue 46–53; it reads GENGAGKS.

This sequence belongs to the ABC transporter superfamily. Galactose/methyl galactoside importer (TC 3.A.1.2.3) family. As to quaternary structure, the complex is composed of one ATP-binding protein (MglA), two transmembrane proteins (MglC) and a solute-binding protein (MglB).

Its subcellular location is the cell inner membrane. It carries out the reaction D-galactose(out) + ATP + H2O = D-galactose(in) + ADP + phosphate + H(+). It catalyses the reaction methyl beta-D-galactoside(out) + ATP + H2O = methyl beta-D-galactoside(in) + ADP + phosphate + H(+). Functionally, part of the ABC transporter complex MglABC involved in galactose/methyl galactoside import. Responsible for energy coupling to the transport system. The chain is Galactose/methyl galactoside import ATP-binding protein MglA from Shigella boydii serotype 4 (strain Sb227).